The chain runs to 522 residues: Gypsy retrotransposon integrase-like protein 1 (522 aa).

The region spanning Lys135–Asn292 is the Integrase catalytic domain. The residue at position 502 (Ser502) is a Phosphoserine.

This chain is Gypsy retrotransposon integrase-like protein 1 (GIN1), found in Pongo abelii (Sumatran orangutan).